Here is a 503-residue protein sequence, read N- to C-terminus: MHTHNNFKTPSDADELDDLDDDMVIGVIEEIAQEALVGEDESDSDIDEHDLADMEAPEPNQNADENESISSDSSFDPNAEDSSDSDDSMLEEDEAEGASSGEATSAKRRKDDNDGPCGSAGDSAAFDLDDLDDETDETVRAIIAAIKKPRSAPPEIKLEDFITDVCFHPDRDIIALATIIGDVHLYEYGNEGNKLLRTIEVHSKACRDVEFTEDGRYLLTASKDKCVMVTDLETEKLKKLYETAHDDAINKLHVLDENLFATGDDAGTVKLWDLRTKNPIFELKEVEDQITQMITNDQKKLLLATSADGYLTTFNIAARKLYVQSEPYEEELNCMGIYRGSSKLVVGTSKGKLYSYNWGYFGYHCDMYPGIKSPVSLMIPITDRIACVAGEDGNIRACHITPYRNLGVVGQHNMPIESLDINTSGELLASSSHNNDVRFWNVKYFEDFGDIKYNDKHNAYKEKRHNLPSSKCTNASDFFSDLTKEDEDNADNNDAAAGPSNSA.

The disordered stretch occupies residues 1–131 (MHTHNNFKTP…DSAAFDLDDL (131 aa)). Acidic residues-rich tracts occupy residues 12-23 (DADELDDLDDDM) and 37-56 (VGED…DMEA). Positions 59–76 (PNQNADENESISSDSSFD) are enriched in polar residues. Positions 78–96 (NAEDSSDSDDSMLEEDEAE) are enriched in acidic residues. 6 WD repeats span residues 157 to 196 (KLED…NKLL), 201 to 242 (VHSK…KLYE), 244 to 282 (AHDD…PIFE), 285 to 324 (EVED…LYVQ), 327 to 366 (PYEE…YHCD), and 411 to 450 (QHNM…DFGD). The interval 483–503 (TKEDEDNADNNDAAAGPSNSA) is disordered.

It belongs to the WD repeat WDR55 family.

The chain is WD repeat-containing protein 55 homolog from Drosophila pseudoobscura pseudoobscura (Fruit fly).